Here is a 108-residue protein sequence, read N- to C-terminus: L-rhamnose mutarotase (108 aa).

A substrate-binding site is contributed by tyrosine 19. Histidine 23 functions as the Proton donor in the catalytic mechanism. Residues tyrosine 45 and 80–81 each bind substrate; that span reads WW.

This sequence belongs to the rhamnose mutarotase family. Homodimer.

It is found in the cytoplasm. The catalysed reaction is alpha-L-rhamnose = beta-L-rhamnose. It participates in carbohydrate metabolism; L-rhamnose metabolism. Involved in the anomeric conversion of L-rhamnose. In Ligilactobacillus salivarius (strain UCC118) (Lactobacillus salivarius), this protein is L-rhamnose mutarotase.